The sequence spans 152 residues: UPF0266 membrane protein YobD (152 aa).

The next 3 helical transmembrane spans lie at 6–26, 45–65, and 67–87; these read LVLILFIAALLAFAIYDQFIM, IDSVIFVGLIVILIYNNVTNH, and ALITTWLLSALALMGFYIFWI.

Belongs to the UPF0266 family.

It is found in the cell inner membrane. The protein is UPF0266 membrane protein YobD of Escherichia coli O45:K1 (strain S88 / ExPEC).